The primary structure comprises 588 residues: 2-succinyl-5-enolpyruvyl-6-hydroxy-3-cyclohexene-1-carboxylate synthase (588 aa).

This sequence belongs to the TPP enzyme family. MenD subfamily. In terms of assembly, homodimer. It depends on Mg(2+) as a cofactor. Mn(2+) serves as cofactor. Requires thiamine diphosphate as cofactor.

The catalysed reaction is isochorismate + 2-oxoglutarate + H(+) = 5-enolpyruvoyl-6-hydroxy-2-succinyl-cyclohex-3-ene-1-carboxylate + CO2. It functions in the pathway quinol/quinone metabolism; 1,4-dihydroxy-2-naphthoate biosynthesis; 1,4-dihydroxy-2-naphthoate from chorismate: step 2/7. The protein operates within cofactor biosynthesis; phylloquinone biosynthesis. Its function is as follows. Catalyzes the thiamine diphosphate-dependent decarboxylation of 2-oxoglutarate and the subsequent addition of the resulting succinic semialdehyde-thiamine pyrophosphate anion to isochorismate to yield 2-succinyl-5-enolpyruvyl-6-hydroxy-3-cyclohexene-1-carboxylate (SEPHCHC). This Prochlorococcus marinus (strain MIT 9515) protein is 2-succinyl-5-enolpyruvyl-6-hydroxy-3-cyclohexene-1-carboxylate synthase.